Here is a 328-residue protein sequence, read N- to C-terminus: MSQRQVAYVFDLNKCIGCHTCTMACKQLWTNRDGREYMYWNNVETRPGKGYPKNWEGKGGGFDQEGKLKTNGIIPIMADYGGRIGDFNLNEVLLEGKADQVVPHEKATWGPNWDEDEGKGEFPNNHSFYLPRICNHCSNPACLAACPTKAIYKRPEDGIVVVDQTRCRGYRYCVKACPYGKMYFNLQKGKSEKCIGCYPRVEKGEAPACVKQCSGRIRFWGYRDDKNGPIYKLVEQWKVALPLHAEYGTEPNVFYVPPMNTTPPPFEEDGRLGDKPRIPIEDLEALFGPGVKQALATLGGEMAKRRKAQASELTDILIGFTNKDRYGV.

4Fe-4S ferredoxin-type domains are found at residues 6 to 35 (VAYVFDLNKCIGCHTCTMACKQLWTNRDGR), 125 to 156 (NHSFYLPRICNHCSNPACLAACPTKAIYKRPE), and 158 to 187 (GIVVVDQTRCRGYRYCVKACPYGKMYFNLQ). [4Fe-4S] cluster-binding residues include Cys15, Cys18, Cys21, Cys25, Cys134, Cys137, and Cys142. The [3Fe-4S] cluster site is built by Cys146, Cys167, and Cys173. [4Fe-4S] cluster-binding residues include Cys177, Cys194, Cys197, Cys209, and Cys213.

In terms of assembly, heterotrimer of alpha, beta and gamma subunits. [3Fe-4S] cluster is required as a cofactor. Requires [4Fe-4S] cluster as cofactor.

It is found in the periplasm. Electron transfer subunit of the terminal reductase during anaerobic growth on chlorate. This chain is Chlorate reductase subunit beta (clrB), found in Ideonella dechloratans.